A 407-amino-acid polypeptide reads, in one-letter code: Probable tRNA pseudouridine synthase D (407 aa).

Aspartate 81 acts as the Nucleophile in catalysis. A TRUD domain is found at 151-372; that stretch reads GFPNYFGIQR…PGGRRELLIR (222 aa).

Belongs to the pseudouridine synthase TruD family.

It catalyses the reaction uridine(13) in tRNA = pseudouridine(13) in tRNA. In terms of biological role, could be responsible for synthesis of pseudouridine from uracil-13 in transfer RNAs. This Pyrococcus furiosus (strain ATCC 43587 / DSM 3638 / JCM 8422 / Vc1) protein is Probable tRNA pseudouridine synthase D.